Here is a 555-residue protein sequence, read N- to C-terminus: Glucose-6-phosphate isomerase (555 aa).

D-glucose 6-phosphate is bound by residues 169–170, 219–224, Gln364, Glu368, His399, and Lys521; these read GS and SKTFTT. Glu368 acts as the Proton donor in catalysis. Residues His399 and Lys521 contribute to the active site.

Belongs to the GPI family. Homodimer.

It is found in the cytoplasm. The protein resides in the cytosol. The enzyme catalyses alpha-D-glucose 6-phosphate = beta-D-fructose 6-phosphate. Its pathway is carbohydrate degradation; glycolysis; D-glyceraldehyde 3-phosphate and glycerone phosphate from D-glucose: step 2/4. In terms of biological role, in the cytoplasm, catalyzes the conversion of glucose-6-phosphate to fructose-6-phosphate, the second step in glycolysis, and the reverse reaction during gluconeogenesis. The protein is Glucose-6-phosphate isomerase (PGI1) of Eremothecium gossypii (strain ATCC 10895 / CBS 109.51 / FGSC 9923 / NRRL Y-1056) (Yeast).